A 305-amino-acid chain; its full sequence is UDP-N-acetylenolpyruvoylglucosamine reductase (305 aa).

Residues 34–199 (RVGGPAQVLF…TSARFRGEVK (166 aa)) enclose the FAD-binding PCMH-type domain. Residue Arg-179 is part of the active site. Ser-228 serves as the catalytic Proton donor. Glu-298 is a catalytic residue.

This sequence belongs to the MurB family. FAD is required as a cofactor.

The protein localises to the cytoplasm. It carries out the reaction UDP-N-acetyl-alpha-D-muramate + NADP(+) = UDP-N-acetyl-3-O-(1-carboxyvinyl)-alpha-D-glucosamine + NADPH + H(+). It functions in the pathway cell wall biogenesis; peptidoglycan biosynthesis. In terms of biological role, cell wall formation. In Bradyrhizobium diazoefficiens (strain JCM 10833 / BCRC 13528 / IAM 13628 / NBRC 14792 / USDA 110), this protein is UDP-N-acetylenolpyruvoylglucosamine reductase.